A 256-amino-acid chain; its full sequence is Coiled-coil domain-containing protein 90B, mitochondrial (256 aa).

Residues 1-42 (MRSRWIWRFLRPDGGGIRWTSTPHGRLSPALRRGFLTTTTKS) constitute a mitochondrion transit peptide. Positions 129–167 (LEKSEFANLRAENEKMKIELDQVKQQLTNETSRIRADNK) form a coiled coil. Residues 231-253 (TIRYLAASVFTCLAIALGFYRFW) traverse the membrane as a helical segment.

The protein belongs to the CCDC90 family. In terms of assembly, interacts with MCU.

The protein localises to the mitochondrion membrane. The sequence is that of Coiled-coil domain-containing protein 90B, mitochondrial (Ccdc90b) from Mus musculus (Mouse).